The primary structure comprises 44 residues: Photosystem I reaction center subunit IX (44 aa).

A helical membrane pass occupies residues 9–29 (YMRSAPVVAAAWITMTAGIII).

It belongs to the PsaJ family.

It is found in the cellular thylakoid membrane. In terms of biological role, may help in the organization of the PsaE and PsaF subunits. In Prochlorococcus marinus (strain MIT 9312), this protein is Photosystem I reaction center subunit IX.